The chain runs to 308 residues: MFHDLLEFNEEVLDAINDKNPIVALESTIISHGMPYPDNLTTAIEVENIIRRQGAIPATIAMHQGKIRVGLTQEVMEHLALQKEVIKASRRDISFVLSRKVTASTTVAATMFCAHMAKLPLFVTGGIGGVHQDVTMSFDISADLIELSNTPVTVVCSGAKSILDLPKTLEVLETFGVPVIGYATDEFPAFYSRSSGIPVPQRLNSAEEVANLMSIQQKLNMKNGIVVANPIPVSAELSDEEISPYIKQAHDEAKHMSGKSLTPFLLKRIAELTAGKSLEANIELIKNNAFLGAEIAIAYQKKLFSKKT.

The active-site Proton donor is glutamate 26. Substrate is bound by residues lysine 87 and valine 107. Aspartate 139 is a binding site for Mn(2+). Position 141–143 (141–143) interacts with substrate; that stretch reads SAD. Lysine 160 acts as the Nucleophile in catalysis.

The protein belongs to the pseudouridine-5'-phosphate glycosidase family. Homotrimer. It depends on Mn(2+) as a cofactor.

The catalysed reaction is D-ribose 5-phosphate + uracil = psi-UMP + H2O. In terms of biological role, catalyzes the reversible cleavage of pseudouridine 5'-phosphate (PsiMP) to ribose 5-phosphate and uracil. Functions biologically in the cleavage direction, as part of a pseudouridine degradation pathway. In Legionella pneumophila subsp. pneumophila (strain Philadelphia 1 / ATCC 33152 / DSM 7513), this protein is Pseudouridine-5'-phosphate glycosidase.